A 98-amino-acid chain; its full sequence is NADH-ubiquinone oxidoreductase chain 4L (98 aa).

3 helical membrane passes run 1 to 21 (MPVV…GLLI), 29 to 49 (SLLC…VTVL), and 61 to 81 (IILL…LVMV).

This sequence belongs to the complex I subunit 4L family. As to quaternary structure, core subunit of respiratory chain NADH dehydrogenase (Complex I) which is composed of 45 different subunits.

The protein resides in the mitochondrion inner membrane. It carries out the reaction a ubiquinone + NADH + 5 H(+)(in) = a ubiquinol + NAD(+) + 4 H(+)(out). In terms of biological role, core subunit of the mitochondrial membrane respiratory chain NADH dehydrogenase (Complex I) which catalyzes electron transfer from NADH through the respiratory chain, using ubiquinone as an electron acceptor. Part of the enzyme membrane arm which is embedded in the lipid bilayer and involved in proton translocation. This chain is NADH-ubiquinone oxidoreductase chain 4L (MT-ND4L), found in Ursus americanus (American black bear).